We begin with the raw amino-acid sequence, 86 residues long: Small ribosomal subunit protein uS17 (86 aa).

Belongs to the universal ribosomal protein uS17 family. Part of the 30S ribosomal subunit.

Its function is as follows. One of the primary rRNA binding proteins, it binds specifically to the 5'-end of 16S ribosomal RNA. This is Small ribosomal subunit protein uS17 from Lactococcus lactis subsp. cremoris (strain MG1363).